A 398-amino-acid polypeptide reads, in one-letter code: Subtilisin-like serine protease EN45_076310 (398 aa).

The N-terminal stretch at 1 to 19 is a signal peptide; sequence MGFLKLLSTSLATLAVVNA. Positions 20 to 115 are cleaved as a propeptide — removed in mature form; that stretch reads GKLLTANDGD…VEPDMVVNAT (96 aa). In terms of domain architecture, Inhibitor I9 spans 35–113; that stretch reads SYIVVMNDGV…KYVEPDMVVN (79 aa). Residue Asn113 is glycosylated (N-linked (GlcNAc...) asparagine). The igE-binding stretch occupies residues 124–134; that stretch reads PSWGLSRISSK. One can recognise a Peptidase S8 domain in the interval 125–398; it reads SWGLSRISSK…KLLYNGINAQ (274 aa). Residue Asp157 is the Charge relay system of the active site. The tract at residues 163–170 is igE-binding; it reads GHADFGGR. The segment at 175–195 is disordered; that stretch reads TNTADNDDTDGNGHGTHTAST. The active-site Charge relay system is the His188. An igE-binding region spans residues 227–245; the sequence is IAGMDWAVKDSKSRGATGK. Asn249 carries N-linked (GlcNAc...) asparagine glycosylation. An igE-binding region spans residues 310–318; it reads SFTNFGSVV. Ser343 functions as the Charge relay system in the catalytic mechanism.

The protein belongs to the peptidase S8 family.

It is found in the secreted. Inhibited by phenylmethanesulfonyl fluoride (PMSF) and diethyl pyrocarbonate (DEPC), but not by benzamidine. Functionally, serine protease that hydrolyzes casein, gelatin and human collagen type IV, but not elastin in vitro. Hydrolyzes OCLN of the human lung epithelial cells at 202-Gln-|-Ser-203 and Gln-211-|-Ile-212. The protein is Subtilisin-like serine protease EN45_076310 of Penicillium chrysogenum (Penicillium notatum).